Consider the following 913-residue polypeptide: Collagen alpha-2(I) chain (913 aa).

The disordered stretch occupies residues 1 to 913; sequence SGGFDFSFLP…FGYEGDFYRA (913 aa). 4-hydroxyproline occurs at positions 10, 13, 35, and 41. Low complexity-rich tracts occupy residues 28 to 67, 125 to 154, and 199 to 220; these read LMGPRGPPGASGAPGPQGFQGPAGEPGEPGQTGPAGARGP, VGAPGPAGARGSDGSVGPVGPAGPIGSAGP, and PGANGLTGAKGAAGLPGVAGAP. A compositionally biased stretch (gly residues) spans 254–263; sequence GESGGKGEPG. Residues 264 to 274 are compositionally biased toward low complexity; the sequence is SAGPQGPPGSS. Positions 281-303 are enriched in gly residues; it reads GPNGGSTGPTGPPGLRGGPGSRG. The segment covering 316–332 has biased composition (low complexity); it reads PAGARGASGPAGVRGPS. 4-hydroxyproline occurs at positions 338 and 341. Composition is skewed to low complexity over residues 367–386 and 408–421; these read LPGIDGRPGPIGPAGARGEA and PDGNNGAQGPPGLQ. Residues 422–431 are compositionally biased toward gly residues; that stretch reads GVQGGKGTTG. Low complexity-rich tracts occupy residues 459–476 and 488–498; these read PGESGAVGPSGAIGSRGP and EPGVVGAPGTA. The span at 499–517 shows a compositional bias: gly residues; it reads GPAGSGGPGERGAAGIPGG. 2 stretches are compositionally biased toward low complexity: residues 527–574 and 581–601; these read RGEV…PRGS and VGPAGPNGFAGPAGAAGQPGA. The span at 602 to 611 shows a compositional bias: basic and acidic residues; that stretch reads KGERGTKGPK. Low complexity predominate over residues 619–629; it reads PTGPVGSAGPA. The segment covering 639-648 has biased composition (gly residues); the sequence is GSRGDGGPPG. Positions 650–659 are enriched in low complexity; that stretch reads TGFPGAAGRT. Residues 696-705 are compositionally biased toward gly residues; that stretch reads GETGAGGPPG. Low complexity-rich tracts occupy residues 713-740 and 748-758; these read SGEPGTAGPPGTAGPQGLLGAPGILGLP and LPGVAGAVGEP. A compositionally biased stretch (gly residues) spans 759 to 776; it reads GPLGIGPPGARGPSGAGK. Positions 782-797 are enriched in low complexity; that stretch reads EPGPVGSVGPVGALGP. The span at 807–818 shows a compositional bias: basic and acidic residues; that stretch reads RGDKGEPGEKGP. Residues 883–895 are compositionally biased toward pro residues; the sequence is SGPPGPPGPPGPP.

The protein belongs to the fibrillar collagen family. Trimers of one alpha 2(I) and two alpha 1(I) chains. Interacts (via C-terminus) with TMEM131 (via PapD-L domain); the interaction is direct and is involved in assembly and TRAPPIII ER-to-Golgi transport complex-dependent secretion of collagen. Prolines at the third position of the tripeptide repeating unit (G-X-Y) are hydroxylated in some or all of the chains. As to expression, expressed in bones.

The protein localises to the secreted. It is found in the extracellular space. The protein resides in the extracellular matrix. Its function is as follows. Type I collagen is a member of group I collagen (fibrillar forming collagen). The chain is Collagen alpha-2(I) chain from Parocnus serus (Greater Haitian ground sloth).